Here is a 656-residue protein sequence, read N- to C-terminus: UvrABC system protein B (656 aa).

Positions 29–414 constitute a Helicase ATP-binding domain; sequence KLSEFKTKQQ…SLSQNNVIEQ (386 aa). 42-49 is a binding site for ATP; it reads GATGTGKT. The Beta-hairpin motif lies at 95 to 118; the sequence is YFDFYQPEAYLPSKGIYIEKSATV. The Helicase C-terminal domain occupies 434–596; sequence QVEDLIEEII…KTPKTVVKPL (163 aa). The region spanning 614–649 is the UVR domain; that stretch reads AALIKQLTKEMKKAAANQNYELAIEIRDSIFELEKE.

It belongs to the UvrB family. As to quaternary structure, forms a heterotetramer with UvrA during the search for lesions. Interacts with UvrC in an incision complex.

Its subcellular location is the cytoplasm. Functionally, the UvrABC repair system catalyzes the recognition and processing of DNA lesions. A damage recognition complex composed of 2 UvrA and 2 UvrB subunits scans DNA for abnormalities. Upon binding of the UvrA(2)B(2) complex to a putative damaged site, the DNA wraps around one UvrB monomer. DNA wrap is dependent on ATP binding by UvrB and probably causes local melting of the DNA helix, facilitating insertion of UvrB beta-hairpin between the DNA strands. Then UvrB probes one DNA strand for the presence of a lesion. If a lesion is found the UvrA subunits dissociate and the UvrB-DNA preincision complex is formed. This complex is subsequently bound by UvrC and the second UvrB is released. If no lesion is found, the DNA wraps around the other UvrB subunit that will check the other stand for damage. The polypeptide is UvrABC system protein B (Mycoplasma genitalium (strain ATCC 33530 / DSM 19775 / NCTC 10195 / G37) (Mycoplasmoides genitalium)).